The following is a 150-amino-acid chain: D-aminoacyl-tRNA deacylase (150 aa).

Positions 136–137 (GP) match the Gly-cisPro motif, important for rejection of L-amino acids motif.

This sequence belongs to the DTD family. Homodimer.

Its subcellular location is the cytoplasm. It carries out the reaction glycyl-tRNA(Ala) + H2O = tRNA(Ala) + glycine + H(+). The catalysed reaction is a D-aminoacyl-tRNA + H2O = a tRNA + a D-alpha-amino acid + H(+). An aminoacyl-tRNA editing enzyme that deacylates mischarged D-aminoacyl-tRNAs. Also deacylates mischarged glycyl-tRNA(Ala), protecting cells against glycine mischarging by AlaRS. Acts via tRNA-based rather than protein-based catalysis; rejects L-amino acids rather than detecting D-amino acids in the active site. By recycling D-aminoacyl-tRNA to D-amino acids and free tRNA molecules, this enzyme counteracts the toxicity associated with the formation of D-aminoacyl-tRNA entities in vivo and helps enforce protein L-homochirality. This Staphylococcus aureus (strain bovine RF122 / ET3-1) protein is D-aminoacyl-tRNA deacylase.